A 266-amino-acid chain; its full sequence is Tryptophan synthase alpha chain (266 aa).

Catalysis depends on proton acceptor residues Glu46 and Asp57.

The protein belongs to the TrpA family. Tetramer of two alpha and two beta chains.

It catalyses the reaction (1S,2R)-1-C-(indol-3-yl)glycerol 3-phosphate + L-serine = D-glyceraldehyde 3-phosphate + L-tryptophan + H2O. It functions in the pathway amino-acid biosynthesis; L-tryptophan biosynthesis; L-tryptophan from chorismate: step 5/5. Functionally, the alpha subunit is responsible for the aldol cleavage of indoleglycerol phosphate to indole and glyceraldehyde 3-phosphate. This chain is Tryptophan synthase alpha chain, found in Lacticaseibacillus casei (Lactobacillus casei).